Consider the following 307-residue polypeptide: Probable RuBisCO transcriptional regulator (307 aa).

The 58-residue stretch at 5-62 (FTLQQLRIFKAIASEKSFTQAAEILFVSQPSLSKQIKTLENRLGILLLNRTGNKILLT) folds into the HTH lysR-type domain. A DNA-binding region (H-T-H motif) is located at residues 22–41 (FTQAAEILFVSQPSLSKQIK).

It belongs to the LysR transcriptional regulatory family.

The protein resides in the plastid. It localises to the chloroplast. Functionally, trans-acting transcriptional regulator of RuBisCO genes (rbcL and rbcS) expression. The sequence is that of Probable RuBisCO transcriptional regulator (rbcR-A) from Thalassiosira pseudonana (Marine diatom).